We begin with the raw amino-acid sequence, 355 residues long: uncharacterized protein (355 aa).

The first 21 residues, 1-21 (MQKKVLFNDIVFVCFPITDNG), serve as a signal peptide directing secretion. N-linked (GlcNAc...) asparagine; by host glycosylation is found at Asn20, Asn78, Asn87, Asn156, Asn159, and Asn274. At 22 to 331 (SIIISDIGYS…SSTSFFSRYG (310 aa)) the chain is on the virion surface side. Residues 288 to 317 (GSKSTPNGPNGPTPTPSNGPNGPTPVPGIP) are disordered. The span at 296 to 317 (PNGPTPTPSNGPNGPTPVPGIP) shows a compositional bias: pro residues. Asn320 is a glycosylation site (N-linked (GlcNAc...) asparagine; by host). A helical membrane pass occupies residues 332 to 352 (LWIIIAIILLIVIISAVGIYF). Over 353–355 (YLR) the chain is Intravirion.

It localises to the host membrane. It is found in the virion. This is an uncharacterized protein from Acanthamoeba polyphaga mimivirus (APMV).